We begin with the raw amino-acid sequence, 338 residues long: Anthranilate phosphoribosyltransferase (338 aa).

5-phospho-alpha-D-ribose 1-diphosphate contacts are provided by residues G81, 84-85, T89, 91-94, 109-117, and A121; these read GD, NIST, and KHGNRNLSS. G81 is an anthranilate binding site. S93 is a binding site for Mg(2+). N112 lines the anthranilate pocket. Residue R167 coordinates anthranilate. 2 residues coordinate Mg(2+): D226 and E227.

Belongs to the anthranilate phosphoribosyltransferase family. In terms of assembly, homodimer. Mg(2+) serves as cofactor.

It catalyses the reaction N-(5-phospho-beta-D-ribosyl)anthranilate + diphosphate = 5-phospho-alpha-D-ribose 1-diphosphate + anthranilate. It functions in the pathway amino-acid biosynthesis; L-tryptophan biosynthesis; L-tryptophan from chorismate: step 2/5. In terms of biological role, catalyzes the transfer of the phosphoribosyl group of 5-phosphorylribose-1-pyrophosphate (PRPP) to anthranilate to yield N-(5'-phosphoribosyl)-anthranilate (PRA). This is Anthranilate phosphoribosyltransferase from Cereibacter sphaeroides (strain ATCC 17025 / ATH 2.4.3) (Rhodobacter sphaeroides).